A 66-amino-acid chain; its full sequence is Delta-buthitoxin-Hj1a (66 aa).

The region spanning arginine 4 to histidine 66 is the LCN-type CS-alpha/beta domain. Intrachain disulfides connect cysteine 14–cysteine 65, cysteine 18–cysteine 38, cysteine 24–cysteine 48, and cysteine 28–cysteine 50.

This sequence belongs to the long (4 C-C) scorpion toxin superfamily. Sodium channel inhibitor family. Alpha subfamily. In terms of tissue distribution, expressed by the venom gland.

The protein localises to the secreted. In terms of biological role, this recombinant toxin slows fast inactivation on Nav1.1/SCN1A (EC(50)=17 nM), Nav1.4/SN4A (EC(50)=7.5 nM), Nav1.5/SCN5A (EC(50)=9.2 nM) and Nav1.6/SCN8A (EC(50)=37.3 nM) voltage-gated sodium channels. On Nav1.1/SCN1A channel, it acts as an agonist by inducing a shift in both the voltage dependence of channel inactivation (alpha-toxin activity) and activation (beta-toxin activity). In vivo, shows moderate insecticidal activities. It induces irreversible paralysis in blowflies and lethal effects in D.melanogaster. This chain is Delta-buthitoxin-Hj1a, found in Hottentotta judaicus (Black scorpion).